The following is a 504-amino-acid chain: Ribonuclease Y (504 aa).

The chain crosses the membrane as a helical span at residues 2–22; sequence TTSIVIGVVLVTVGLTFGWTI. One can recognise a KH domain in the interval 194–279; that stretch reads TVSTVNLPSE…EIVQKVTQEV (86 aa). Positions 320–413 constitute an HD domain; the sequence is VLYHSKEVAL…VQVADAISAA (94 aa).

This sequence belongs to the RNase Y family.

Its subcellular location is the cell membrane. Endoribonuclease that initiates mRNA decay. This is Ribonuclease Y from Treponema pallidum (strain Nichols).